The primary structure comprises 151 residues: Deoxyuridine 5'-triphosphate nucleotidohydrolase (151 aa).

Residues 70 to 72 (RSG), Asn83, 87 to 89 (LID), and Met97 contribute to the substrate site.

Belongs to the dUTPase family. Mg(2+) is required as a cofactor.

The enzyme catalyses dUTP + H2O = dUMP + diphosphate + H(+). Its pathway is pyrimidine metabolism; dUMP biosynthesis; dUMP from dCTP (dUTP route): step 2/2. In terms of biological role, this enzyme is involved in nucleotide metabolism: it produces dUMP, the immediate precursor of thymidine nucleotides and it decreases the intracellular concentration of dUTP so that uracil cannot be incorporated into DNA. The chain is Deoxyuridine 5'-triphosphate nucleotidohydrolase from Tolumonas auensis (strain DSM 9187 / NBRC 110442 / TA 4).